Consider the following 1073-residue polypeptide: Semaphorin-6D (1073 aa).

The N-terminal stretch at M1 to A20 is a signal peptide. At V21–N662 the chain is on the extracellular side. Residues D27–L512 enclose the Sema domain. Residue N51 is glycosylated (N-linked (GlcNAc...) asparagine). 4 cysteine pairs are disulfide-bonded: C108–C118, C136–C145, C259–C370, and C284–C329. N-linked (GlcNAc...) asparagine glycosylation occurs at N283. 2 N-linked (GlcNAc...) asparagine glycosylation sites follow: N435 and N461. Intrachain disulfides connect C477/C506, C515/C533, C521/C568, and C525/C541. In terms of domain architecture, PSI spans R514–H569. N-linked (GlcNAc...) asparagine glycosylation is present at N631. Residues V663–V683 traverse the membrane as a helical segment. Residues Y684–Y1073 lie on the Cytoplasmic side of the membrane. 3 positions are modified to phosphoserine: S723, S734, and S744. 4 disordered regions span residues R745 to P825, T839 to R876, P919 to G986, and L1021 to Y1073. T773 bears the Phosphothreonine mark. Residues S790 to P806 show a composition bias toward basic and acidic residues. S931, S957, and S983 each carry phosphoserine. Positions S931–T942 are enriched in polar residues. 2 stretches are compositionally biased toward polar residues: residues L1021–L1037 and V1059–Y1073.

This sequence belongs to the semaphorin family. In terms of tissue distribution, expressed in brain and lung.

It is found in the cell membrane. Functionally, shows growth cone collapsing activity on dorsal root ganglion (DRG) neurons in vitro. May be a stop signal for the DRG neurons in their target areas, and possibly also for other neurons. May also be involved in the maintenance and remodeling of neuronal connections. Ligand of TREM2 with PLXNA1 as coreceptor in dendritic cells, plays a role in the generation of immune responses and skeletal homeostasis. The chain is Semaphorin-6D (Sema6d) from Mus musculus (Mouse).